The chain runs to 292 residues: Short chain dehydrogenase mpl6 (292 aa).

Residues Val37, Asp95, Asn122, Arg156, Tyr188, Lys192, Val221, and Thr223 each contribute to the NADP(+) site. Tyr188 (proton donor) is an active-site residue. Residue Lys192 is the Lowers pKa of active site Tyr of the active site.

This sequence belongs to the short-chain dehydrogenases/reductases (SDR) family.

It functions in the pathway mycotoxin biosynthesis. Short chain dehydrogenase; part of the gene cluster that mediates the biosynthesis of the mycotoxin citrinin, a hepato-nephrotoxic compound to humans due to inhibition of respiration complex III. The pathway begins with the synthesis of a keto-aldehyde intermediate by the citrinin PKS (pksCT) from successive condensations of 4 malonyl-CoA units, presumably with a simple acetyl-CoA starter unit. Release of the keto-aldehyde intermediate is consistent with the presence of the C-terminal reductive release domain. Mp11 collaborates with pksCT by catalyzing the hydrolysis of ACP-bound acyl intermediates to free the ACP from stalled intermediates. Mpl2 then catalyzes the oxidation of the C-12 methyl of the ketone intermediate to an alcohol intermediate which is further oxidized by the oxidoreductase mpl7 to produce a bisaldehyde intermediate. The fourth catalytic step is catalyzed by the mpl4 aldehyde dehydrogenase. The final transformation is the reduction of C-3 by mpl6 to provide the chemically stable citrinin nucleus. The sequence is that of Short chain dehydrogenase mpl6 from Monascus purpureus (Red mold).